The primary structure comprises 103 residues: UPF0145 protein BC_1816 (103 aa).

This sequence belongs to the UPF0145 family.

The protein is UPF0145 protein BC_1816 of Bacillus cereus (strain ATCC 14579 / DSM 31 / CCUG 7414 / JCM 2152 / NBRC 15305 / NCIMB 9373 / NCTC 2599 / NRRL B-3711).